Here is a 225-residue protein sequence, read N- to C-terminus: Octanoyltransferase (225 aa).

The BPL/LPL catalytic domain maps to 37 to 217 (SDTPDEFWVV…ELASLIGYQT (181 aa)). Substrate is bound by residues 76-83 (RGGQVTYH), 148-150 (SLG), and 161-163 (GLA). Cysteine 179 functions as the Acyl-thioester intermediate in the catalytic mechanism.

This sequence belongs to the LipB family.

It is found in the cytoplasm. The enzyme catalyses octanoyl-[ACP] + L-lysyl-[protein] = N(6)-octanoyl-L-lysyl-[protein] + holo-[ACP] + H(+). It participates in protein modification; protein lipoylation via endogenous pathway; protein N(6)-(lipoyl)lysine from octanoyl-[acyl-carrier-protein]: step 1/2. Functionally, catalyzes the transfer of endogenously produced octanoic acid from octanoyl-acyl-carrier-protein onto the lipoyl domains of lipoate-dependent enzymes. Lipoyl-ACP can also act as a substrate although octanoyl-ACP is likely to be the physiological substrate. The chain is Octanoyltransferase from Aeromonas salmonicida (strain A449).